The following is a 301-amino-acid chain: E3 ubiquitin-protein ligase DIS1 (301 aa).

The RING-type; degenerate zinc finger occupies Cys-53–Arg-89. The SIAH-type; degenerate zinc-finger motif lies at Ser-106 to Lys-166.

It belongs to the SINA (Seven in absentia) family. In terms of assembly, homodimer. Interacts with NEK6. Interacts with SKIPA.

The protein resides in the nucleus. The protein localises to the cytoplasm. The catalysed reaction is S-ubiquitinyl-[E2 ubiquitin-conjugating enzyme]-L-cysteine + [acceptor protein]-L-lysine = [E2 ubiquitin-conjugating enzyme]-L-cysteine + N(6)-ubiquitinyl-[acceptor protein]-L-lysine.. Its pathway is protein modification; protein ubiquitination. Its function is as follows. E3 ubiquitin-protein ligase that mediates ubiquitination and subsequent proteasomal degradation of target proteins. E3 ubiquitin ligases accept ubiquitin from an E2 ubiquitin-conjugating enzyme in the form of a thioester and then directly transfers the ubiquitin to targeted substrates. Plays a negative role in drought stress tolerance through transcriptional and post-translational regulation of diverse stress-related genes. Interacts with the serine/threonine-protein kinase NEK6 and promotes its degradation via the 26S proteasome-dependent pathway. This Oryza sativa subsp. japonica (Rice) protein is E3 ubiquitin-protein ligase DIS1.